Here is a 527-residue protein sequence, read N- to C-terminus: Baicalin-beta-D-glucuronidase (527 aa).

Residues 1 to 25 (MGFQVWQKGLCVLCFSLIFICGVIG) form the signal peptide. The Proton donor role is filled by Glu-212. The active-site Nucleophile is the Glu-329.

It belongs to the glycosyl hydrolase 79 family. As to quaternary structure, homotetramer.

It carries out the reaction baicalin + H2O = baicalein + D-glucuronate + H(+). Its function is as follows. Beta-glucuronidase involved in the initiation of H(2)O(2) metabolism via the production of baicalein. Unable to use glycyrrhizin, gypsogenin-3-O-D-glucuronide, luteolin-7-O-D-glucoside and apigenin-7-O-D-glucoside as substrates. This Scutellaria baicalensis (Baical skullcap) protein is Baicalin-beta-D-glucuronidase (SGUS).